The primary structure comprises 401 residues: Phosphoglycerate kinase, cytosolic (401 aa).

Residues A24, D25, N27, R41, S63, H64, G66, R67, R122, H154, and R155 each coordinate (2R)-3-phosphoglycerate. An ADP-binding site is contributed by G200. Position 200 (G200) interacts with CDP. Residues K202 and K206 each contribute to the AMP site. K206 contacts ATP. G224 contributes to the ADP binding site. G224 is a binding site for CDP. Positions 225 and 297 each coordinate AMP. G225 and G297 together coordinate ATP. CDP is bound by residues G322 and F327. An ADP-binding site is contributed by F327. An AMP-binding site is contributed by E328. The ATP site is built by E328, D359, and S360. D359 lines the Mg(2+) pocket.

It belongs to the phosphoglycerate kinase family. Monomer. The cofactor is Mg(2+).

It is found in the cytoplasm. The enzyme catalyses (2R)-3-phosphoglycerate + ATP = (2R)-3-phospho-glyceroyl phosphate + ADP. Its pathway is carbohydrate degradation; glycolysis; pyruvate from D-glyceraldehyde 3-phosphate: step 2/5. The chain is Phosphoglycerate kinase, cytosolic from Triticum aestivum (Wheat).